Consider the following 117-residue polypeptide: MSKQPRKQRKALYNAPAHARGKHMSATLSKDLRADIGKRSLPIRKGDKVQVLRGDFKGHEGAVLGVDYGSYKITIEEVTLSKPDGTAVFLPVDPSNVMIIDADMDDDRRIKNVTGDN.

A compositionally biased stretch (basic residues) spans 1 to 10 (MSKQPRKQRK). The interval 1-28 (MSKQPRKQRKALYNAPAHARGKHMSATL) is disordered.

This sequence belongs to the universal ribosomal protein uL24 family. In terms of assembly, part of the 50S ribosomal subunit.

One of two assembly initiator proteins, it binds directly to the 5'-end of the 23S rRNA, where it nucleates assembly of the 50S subunit. Its function is as follows. Located at the polypeptide exit tunnel on the outside of the subunit. This Methanobrevibacter smithii (strain ATCC 35061 / DSM 861 / OCM 144 / PS) protein is Large ribosomal subunit protein uL24.